Consider the following 450-residue polypeptide: 23S rRNA (uracil(1939)-C(5))-methyltransferase RlmD (450 aa).

The 59-residue stretch at 12 to 70 folds into the TRAM domain; sequence SKQLSAKLSLSVNQLDHLGAGIAQHQGKVVFIPGALPDETVTVQLTEQKKNYARAKLIK. Residues cysteine 83, cysteine 89, cysteine 92, and cysteine 171 each contribute to the [4Fe-4S] cluster site. The S-adenosyl-L-methionine site is built by glutamine 283, phenylalanine 312, asparagine 317, glutamate 333, aspartate 360, and aspartate 380. Cysteine 406 functions as the Nucleophile in the catalytic mechanism.

The protein belongs to the class I-like SAM-binding methyltransferase superfamily. RNA M5U methyltransferase family. RlmD subfamily.

It catalyses the reaction uridine(1939) in 23S rRNA + S-adenosyl-L-methionine = 5-methyluridine(1939) in 23S rRNA + S-adenosyl-L-homocysteine + H(+). Catalyzes the formation of 5-methyl-uridine at position 1939 (m5U1939) in 23S rRNA. In Shewanella baltica (strain OS223), this protein is 23S rRNA (uracil(1939)-C(5))-methyltransferase RlmD.